Here is a 1207-residue protein sequence, read N- to C-terminus: DNA-directed RNA polymerase subunit beta' (1207 aa).

Zn(2+) is bound by residues Cys60, Cys62, Cys75, and Cys78. Mg(2+) is bound by residues Asp449, Asp451, and Asp453. Residues Cys822, Cys896, Cys903, and Cys906 each contribute to the Zn(2+) site.

This sequence belongs to the RNA polymerase beta' chain family. The RNAP catalytic core consists of 2 alpha, 1 beta, 1 beta' and 1 omega subunit. When a sigma factor is associated with the core the holoenzyme is formed, which can initiate transcription. Mg(2+) is required as a cofactor. Zn(2+) serves as cofactor.

It carries out the reaction RNA(n) + a ribonucleoside 5'-triphosphate = RNA(n+1) + diphosphate. Functionally, DNA-dependent RNA polymerase catalyzes the transcription of DNA into RNA using the four ribonucleoside triphosphates as substrates. The chain is DNA-directed RNA polymerase subunit beta' from Staphylococcus aureus (strain USA300).